Consider the following 545-residue polypeptide: Serine/threonine-protein kinase PAK 1 (545 aa).

Residues 1–77 are disordered; that stretch reads MSNNGLDIQD…KEKERPEISL (77 aa). At Ser2 the chain carries N-acetylserine. Ser21 carries the phosphoserine; by PKB and autocatalysis modification. Ser57 is modified (phosphoserine; by autocatalysis). A compositionally biased stretch (basic and acidic residues) spans 68–77; it reads KEKERPEISL. The interval 70 to 140 is autoregulatory region; sequence KERPEISLPS…YNSKKTSNSQ (71 aa). One can recognise a CRIB domain in the interval 75–88; that stretch reads ISLPSDFEHTIHVG. Positions 75–105 are GTPase-binding; sequence ISLPSDFEHTIHVGFDAVTGEFTGMPEQWAR. The residue at position 84 (Thr84) is a Phosphothreonine; by OXSR1. At Ser115 the chain carries Phosphoserine. Residues Tyr131 and Tyr142 each carry the phosphotyrosine modification. Ser144 carries the post-translational modification Phosphoserine; by autocatalysis. Ser149 bears the Phosphoserine mark. Tyr153 carries the phosphotyrosine; by JAK2 modification. The tract at residues 159 to 198 is disordered; that stretch reads LNVKAVSETPAVPPVSEDEDDDDDDATPPPVIAPRPEHTK. Position 174 is a phosphoserine (Ser174). Residues 174–184 are compositionally biased toward acidic residues; that stretch reads SEDEDDDDDDA. Thr185 carries the phosphothreonine modification. Ser199 carries the post-translational modification Phosphoserine; by autocatalysis. The residue at position 201 (Tyr201) is a Phosphotyrosine; by JAK2. Ser204 is modified (phosphoserine). The interval 211-251 is disordered; the sequence is VTPTRDVATSPISPTENNTTPPDALTRNTEKQKKKPKMSDE. Residues Thr212 and Thr219 each carry the phosphothreonine modification. Phosphoserine is present on residues Ser220 and Ser223. Positions 220-231 are enriched in polar residues; the sequence is SPISPTENNTTP. 3 positions are modified to phosphothreonine: Thr225, Thr229, and Thr230. A Protein kinase domain is found at 270-521; the sequence is YTRFEKIGQG…AKELLQHQFL (252 aa). ATP is bound at residue 276–284; the sequence is IGQGASGTV. At Tyr285 the chain carries Phosphotyrosine; by JAK2. Residues Lys299 and 345 to 347 each bind ATP; that span reads EYL. Asp389 (proton acceptor) is an active-site residue. Thr423 bears the Phosphothreonine; by autocatalysis, BRSK2 and PDPK1 mark.

Belongs to the protein kinase superfamily. STE Ser/Thr protein kinase family. STE20 subfamily. In terms of assembly, homodimer; homodimerization results in autoinhibition. Active as monomer. Interacts with GIT1. Component of cytoplasmic complexes, which also contains PXN, ARHGEF7 and GIT1. Interacts with NISCH. Interacts with DVL1; mediates the formation of a DVL1, MUSK and PAK1 ternary complex involved in AChR clustering. Binds to the caspase-cleaved p110 isoform of CDC2L1 and CDC2L2, p110C, but not the full-length proteins. Interacts with ARHGEF7. Interacts tightly with GTP-bound but not GDP-bound CDC42/P21 and RAC1. Interacts with SCRIB. Interacts with PDPK1. Interacts (via kinase domain) with RAF1. Interacts with NCK1 and NCK2. Interacts with TBCB. Interacts with BRSK2. Interacts with SNAI1. Interacts with CIB1 isoform 2. Interacts with CIB1 (via N-terminal region); the interaction is direct, promotes PAK1 activity and occurs in a calcium-dependent manner. Interacts with INPP5K. Interacts with gamma-tubulin. Interacts with RHOU; the interaction promotes PAK1 activation. Requires Mg(2+) as cofactor. Autophosphorylated in trans, meaning that in a dimer, one kinase molecule phosphorylates the other one. Activated by autophosphorylation at Thr-423 in response to a conformation change, triggered by interaction with GTP-bound CDC42 or RAC1. Activated by phosphorylation at Thr-423 by BRSK2 and by PDPK1. Phosphorylated by JAK2 in response to PRL; this increases PAK1 kinase activity. Phosphorylated at Ser-21 by PKB/AKT; this reduces interaction with NCK1 and association with focal adhesion sites. Upon DNA damage, phosphorylated at Thr-212 and translocates to the nucleoplasm. Phosphorylated at tyrosine residues, which can be enhanced by NTN1. Overexpressed in gastric cancer cells and tissues (at protein level).

The protein resides in the cytoplasm. Its subcellular location is the cell junction. It localises to the focal adhesion. It is found in the cell projection. The protein localises to the lamellipodium. The protein resides in the cell membrane. Its subcellular location is the ruffle membrane. It localises to the invadopodium. It is found in the nucleus. The protein localises to the nucleoplasm. The protein resides in the chromosome. Its subcellular location is the cytoskeleton. It localises to the microtubule organizing center. It is found in the centrosome. It catalyses the reaction L-seryl-[protein] + ATP = O-phospho-L-seryl-[protein] + ADP + H(+). The enzyme catalyses L-threonyl-[protein] + ATP = O-phospho-L-threonyl-[protein] + ADP + H(+). With respect to regulation, activated by binding small G proteins. Binding of GTP-bound CDC42 or RAC1 to the autoregulatory region releases monomers from the autoinhibited dimer, and enables activation by phosphorylation of Thr-423. Phosphorylation of Thr-84 by OXSR1 inhibits activation. In terms of biological role, protein kinase involved in intracellular signaling pathways downstream of integrins and receptor-type kinases that plays an important role in cytoskeleton dynamics, in cell adhesion, migration, proliferation, apoptosis, mitosis, and in vesicle-mediated transport processes. Can directly phosphorylate BAD and protects cells against apoptosis. Activated by interaction with CDC42 and RAC1. Functions as a GTPase effector that links the Rho-related GTPases CDC42 and RAC1 to the JNK MAP kinase pathway. Phosphorylates and activates MAP2K1, and thereby mediates activation of downstream MAP kinases. Involved in the reorganization of the actin cytoskeleton, actin stress fibers and of focal adhesion complexes. Phosphorylates the tubulin chaperone TBCB and thereby plays a role in the regulation of microtubule biogenesis and organization of the tubulin cytoskeleton. Plays a role in the regulation of insulin secretion in response to elevated glucose levels. Part of a ternary complex that contains PAK1, DVL1 and MUSK that is important for MUSK-dependent regulation of AChR clustering during the formation of the neuromuscular junction (NMJ). Activity is inhibited in cells undergoing apoptosis, potentially due to binding of CDC2L1 and CDC2L2. Phosphorylates MYL9/MLC2. Phosphorylates RAF1 at 'Ser-338' and 'Ser-339' resulting in: activation of RAF1, stimulation of RAF1 translocation to mitochondria, phosphorylation of BAD by RAF1, and RAF1 binding to BCL2. Phosphorylates SNAI1 at 'Ser-246' promoting its transcriptional repressor activity by increasing its accumulation in the nucleus. In podocytes, promotes NR3C2 nuclear localization. Required for atypical chemokine receptor ACKR2-induced phosphorylation of LIMK1 and cofilin (CFL1) and for the up-regulation of ACKR2 from endosomal compartment to cell membrane, increasing its efficiency in chemokine uptake and degradation. In synapses, seems to mediate the regulation of F-actin cluster formation performed by SHANK3, maybe through CFL1 phosphorylation and inactivation. Plays a role in RUFY3-mediated facilitating gastric cancer cells migration and invasion. In response to DNA damage, phosphorylates MORC2 which activates its ATPase activity and facilitates chromatin remodeling. In neurons, plays a crucial role in regulating GABA(A) receptor synaptic stability and hence GABAergic inhibitory synaptic transmission through its role in F-actin stabilization. In hippocampal neurons, necessary for the formation of dendritic spines and excitatory synapses; this function is dependent on kinase activity and may be exerted by the regulation of actomyosin contractility through the phosphorylation of myosin II regulatory light chain (MLC). Along with GIT1, positively regulates microtubule nucleation during interphase. Phosphorylates FXR1, promoting its localization to stress granules and activity. Phosphorylates ILK on 'Thr-173' and 'Ser-246', promoting nuclear export of ILK. This Homo sapiens (Human) protein is Serine/threonine-protein kinase PAK 1.